The following is a 709-amino-acid chain: MSKQVFEMIFAGKKLVVETGQVAKQANGSVVVRYGDSTVLTAAVMSKKMSTGDFFPLQVNYEEKMYAAGKFPGGFNKREGRPSTDATLTARLIDRPIRPMFAEGFRNEVQVINTVLSFDENASAPMAAMFGSSLALSISDIPFNGPIAGVQVAYVDGNFIINPTAQEQEASALELTVAGTKEAINMVESGAKELSEEIMLEALLKGHEAVCELIAFQEEIVTAIGKEKAEVELLQVDPELQAEIIATHNIALQAAVQVEEKKAREAATEAVKEVVIGEYEARYAEHEEYDRIMRDVAEILEQMEHAEVRRLITEDKIRPDGRRVDEIRPLDAEIDFLPQVHGSGLFTRGQTQALSVLTLAPMGEAQIIDGLTPEYKKRFMHHYNFPQYSVGETGRYGAAGRREIGHGALGERALEQVLPSLEEFPYAIRLVAEVLESNGSSSQASICAGTLALMAGGVPIKAPVAGIAMGLISDGTNYTVLTDIQGLEDHFGDMDFKVAGTREGITALQMDIKIEGITPQILEEALAQAKKARFEILDVLHGAIAEPRPQLAPTAPKIDMIKIDVDKIKVVIGKGGETIDKIIAETGVKIDIDEEGNVSIFSSDQAAIDRTKDIIASLVREAKVGEVYHAKVVRIEKFGAFVNLFDKTDALVHISEIAWTRTANVADVLEIGEEVDVKVIKIDDKGRVDASMKALLPRPPKADNPKKES.

Residues D489 and D495 each coordinate Mg(2+). Residues 556–615 form the KH domain; sequence PKIDMIKIDVDKIKVVIGKGGETIDKIIAETGVKIDIDEEGNVSIFSSDQAAIDRTKDII. One can recognise an S1 motif domain in the interval 625 to 693; that stretch reads GEVYHAKVVR…DKGRVDASMK (69 aa).

Belongs to the polyribonucleotide nucleotidyltransferase family. Mg(2+) is required as a cofactor.

The protein localises to the cytoplasm. It catalyses the reaction RNA(n+1) + phosphate = RNA(n) + a ribonucleoside 5'-diphosphate. In terms of biological role, involved in mRNA degradation. Catalyzes the phosphorolysis of single-stranded polyribonucleotides processively in the 3'- to 5'-direction. This chain is Polyribonucleotide nucleotidyltransferase, found in Streptococcus agalactiae serotype Ia (strain ATCC 27591 / A909 / CDC SS700).